Here is a 418-residue protein sequence, read N- to C-terminus: UDP-N-acetylglucosamine 1-carboxyvinyltransferase (418 aa).

22-23 is a phosphoenolpyruvate binding site; sequence KN. UDP-N-acetyl-alpha-D-glucosamine is bound at residue Arg92. Catalysis depends on Cys116, which acts as the Proton donor. Cys116 bears the 2-(S-cysteinyl)pyruvic acid O-phosphothioketal mark. UDP-N-acetyl-alpha-D-glucosamine is bound by residues Asp306 and Ile328.

This sequence belongs to the EPSP synthase family. MurA subfamily.

It localises to the cytoplasm. It carries out the reaction phosphoenolpyruvate + UDP-N-acetyl-alpha-D-glucosamine = UDP-N-acetyl-3-O-(1-carboxyvinyl)-alpha-D-glucosamine + phosphate. Its pathway is cell wall biogenesis; peptidoglycan biosynthesis. Its function is as follows. Cell wall formation. Adds enolpyruvyl to UDP-N-acetylglucosamine. This chain is UDP-N-acetylglucosamine 1-carboxyvinyltransferase, found in Solibacter usitatus (strain Ellin6076).